A 472-amino-acid polypeptide reads, in one-letter code: MAFTAFLLLLSSIAAGFLLLLRRTRYRRMGLPPGSLGLPLIGETFQLIGAYKTENPEPFIDERVARYGSVFMTHLFGEPTIFSADPETNRFVLQNEGKLFECSYPASICNLLGKHSLLLMKGSLHKRMHSLTMSFANSSIIKDHLMLDIDRLVRFNLDSWSSRVLLMEEAKKITFELTVKQLMSFDPGEWSESLRKEYLLVIEGFFSLPLPLFSTTYRKAIQARRKVAEALTVVVMKRREEEEEGAERKKDMLAALLAADDGFSDEEIVDFLVALLVAGYETTSTIMTLAVKFLTETPLALAQLKEEHEKIRAMKSDSYSLEWSDYKSMPFTQCVVNETLRVANIIGGVFRRAMTDVEIKGYKIPKGWKVFSSFRAVHLDPNHFKDARTFNPWRWQSNSVTTGPSNVFTPFGGGPRLCPGYELARVALSVFLHRLVTGFSWVPAEQDKLVFFPTTRTQKRYPIFVKRRDFAT.

A helical transmembrane segment spans residues 1–21; sequence MAFTAFLLLLSSIAAGFLLLL. Cys-418 is a binding site for heme.

This sequence belongs to the cytochrome P450 family. The cofactor is heme.

The protein resides in the membrane. The catalysed reaction is (22S)-22-hydroxycampesterol + reduced [NADPH--hemoprotein reductase] + O2 = (22S)-22-hydroxycampest-4-en-3-one + oxidized [NADPH--hemoprotein reductase] + 2 H2O + H(+). It carries out the reaction 6-deoxoteasterone + reduced [NADPH--hemoprotein reductase] + O2 = 3-dehydro-6-deoxoteasterone + oxidized [NADPH--hemoprotein reductase] + 2 H2O + H(+). The enzyme catalyses 6-deoxycathasterone + reduced [NADPH--hemoprotein reductase] + O2 = (22S,24R)-22-hydroxy-5alpha-ergostan-3-one + oxidized [NADPH--hemoprotein reductase] + 2 H2O + H(+). It catalyses the reaction (22R,23R)-22,23-dihydroxycampesterol + reduced [NADPH--hemoprotein reductase] + O2 = (22R,23R)-22,23-dihydroxycampest-4-en-3-one + oxidized [NADPH--hemoprotein reductase] + 2 H2O + H(+). It participates in plant hormone biosynthesis; brassinosteroid biosynthesis. Functionally, catalyzes C3-oxidation steps in brassinosteroids biosynthesis. Converts (22S)-22-hydroxycampesterol (22-OHCR) to (22S,24R)-22-hydroxyergost-4-en-3-one (22-hydroxy-campesta-4-en-3-one, 22-OH-4-en-3-one), 6-deoxocathasterone (6-deoxoCT) to (22S,24R)-22-hydroxy-5alpha-ergostan-3-one (22-hydroxy-campesta-3-one, 22-OH-3-one), (22R,23R)-22,23-dihydroxycampesterol (22,23-diOHCR) to (22R,23R)-22,23-dihydroxy-campest-4-en-3-one (22,23-diOH-4-en-3-one), and 6-deoxoteasterone (6-deoxoTE) to 3-dehydro-6-deoxoteasterone (6-deoxo3DT, 6-deoxo-3-DHT). The protein is 3beta,22alpha-dihydroxysteroid 3-dehydrogenase of Arabidopsis thaliana (Mouse-ear cress).